The primary structure comprises 277 residues: MEVKAFIEIMRPHNCILAGVVGILGSLVAYEGIPSIEKLGLVFLVVYLGCSAGNTINDYFDVEIDRVNRPNRPIPRGAIPRKVALYYALLQYMLGLALARFLGVEALLFALGAYALTFIYAWKLKPLPFIGNVAVALLTAATPIYGALGVGRVGLAGYLAICAFLVNVSREIMKDIEDIEGDMKMGAKTLPIIIGKRRAAMISSIFGVLTVITSFLPVKVGIGLGYAPIILVDAMILKASIDVVKNPESASKGQKTLKIATFIAVISFLLGALTKGV.

A run of 7 helical transmembrane segments spans residues 16–36, 40–60, 101–121, 129–149, 153–173, 205–225, and 257–277; these read ILAGVVGILGSLVAYEGIPSI, GLVFLVVYLGCSAGNTINDYF, FLGVEALLFALGAYALTFIYA, FIGNVAVALLTAATPIYGALG, VGLAGYLAICAFLVNVSREIM, IFGVLTVITSFLPVKVGIGLG, and LKIATFIAVISFLLGALTKGV.

This sequence belongs to the UbiA prenyltransferase family. DGGGP synthase subfamily. It depends on Mg(2+) as a cofactor.

It is found in the cell membrane. It catalyses the reaction sn-3-O-(geranylgeranyl)glycerol 1-phosphate + (2E,6E,10E)-geranylgeranyl diphosphate = 2,3-bis-O-(geranylgeranyl)-sn-glycerol 1-phosphate + diphosphate. It functions in the pathway membrane lipid metabolism; glycerophospholipid metabolism. Its function is as follows. Prenyltransferase that catalyzes the transfer of the geranylgeranyl moiety of geranylgeranyl diphosphate (GGPP) to the C2 hydroxyl of (S)-3-O-geranylgeranylglyceryl phosphate (GGGP). This reaction is the second ether-bond-formation step in the biosynthesis of archaeal membrane lipids. The chain is Digeranylgeranylglyceryl phosphate synthase from Pyrococcus abyssi (strain GE5 / Orsay).